The following is a 448-amino-acid chain: Gamete and mating-type specific protein A (448 aa).

The N-terminal stretch at 1–19 (MKLILVLLCLISTLFVVKG) is a signal peptide. One can recognise an SCP domain in the interval 30-157 (VSYHNKWRSS…PDKSEVSCSY (128 aa)). 3 N-linked (GlcNAc...) asparagine glycosylation sites follow: N55, N98, and N119. Positions 171–242 (PKTTTPAPTT…PTTPAPTSTL (72 aa)) are disordered. Pro residues predominate over residues 178 to 236 (PTTPAPTTPKPTTPAPTTPKPTTPAPTTPKPTTPAPTTPKPTTPAPTTPKPTTPAPTTP). Catalysis depends on residues C262, H397, and N415.

It belongs to the peptidase C1 family.

It localises to the secreted. Its function is as follows. Thiol protease that seems to be involved in the sexual development. The chain is Gamete and mating-type specific protein A (gmsA) from Dictyostelium discoideum (Social amoeba).